The sequence spans 538 residues: Atos homolog protein B (538 aa).

Low complexity predominate over residues 1-18; sequence MRHVQAEPSPSSEPEAGP. 2 disordered regions span residues 1-114 and 133-300; these read MRHV…LGVA and TSSW…VLDP. Over residues 227-238 the composition is skewed to pro residues; sequence HTPPGPGPPGPC. Phosphoserine is present on residues S254 and S255. Residues 348–430 are required for macropage invasion; the sequence is LLGNFEESLL…VPKVGTVQVT (83 aa). Residues 436-444 are transactivation domain 1 (TAD1); the sequence is QTVVKMFLV.

The protein belongs to the ATOS family.

The protein resides in the nucleus. Its function is as follows. Transcription regulator that may syncronize transcriptional and translational programs. This chain is Atos homolog protein B, found in Homo sapiens (Human).